Here is a 294-residue protein sequence, read N- to C-terminus: Eukaryotic translation initiation factor 3 subunit G (294 aa).

Disordered stretches follow at residues 1 to 43 (MPSA…ENKI) and 160 to 211 (EDDG…RDET). Positions 194–211 (GANRRGETMPSRSQRDET) are enriched in basic and acidic residues. Residues 212–290 (ATIRVTNLSE…LILNVEWAKP (79 aa)) enclose the RRM domain.

The protein belongs to the eIF-3 subunit G family. In terms of assembly, component of the eukaryotic translation initiation factor 3 (eIF-3) complex.

Its subcellular location is the cytoplasm. Its function is as follows. RNA-binding component of the eukaryotic translation initiation factor 3 (eIF-3) complex, which is involved in protein synthesis of a specialized repertoire of mRNAs and, together with other initiation factors, stimulates binding of mRNA and methionyl-tRNAi to the 40S ribosome. The eIF-3 complex specifically targets and initiates translation of a subset of mRNAs involved in cell proliferation. This subunit can bind 18S rRNA. The chain is Eukaryotic translation initiation factor 3 subunit G from Nematostella vectensis (Starlet sea anemone).